Here is a 650-residue protein sequence, read N- to C-terminus: Aminopeptidase B (650 aa).

Serine 7 bears the Phosphoserine mark. 298–302 (GGMEN) is a substrate binding site. Histidine 325 is a binding site for Zn(2+). Catalysis depends on glutamate 326, which acts as the Proton acceptor. Zn(2+) contacts are provided by histidine 329 and glutamate 348. An N6-acetyllysine modification is found at lysine 446.

It belongs to the peptidase M1 family. In terms of assembly, monomer. It depends on Zn(2+) as a cofactor. As to expression, widely expressed.

It localises to the secreted. The enzyme catalyses Release of N-terminal Arg and Lys from oligopeptides when P1' is not Pro. Also acts on arylamides of Arg and Lys.. In terms of biological role, exopeptidase which selectively removes arginine and/or lysine residues from the N-terminus of several peptide substrates including Arg(0)-Leu-enkephalin, Arg(0)-Met-enkephalin and Arg(-1)-Lys(0)-somatostatin-14. Can hydrolyze leukotriene A4 (LTA-4) into leukotriene B4 (LTB-4). The chain is Aminopeptidase B (Rnpep) from Rattus norvegicus (Rat).